The primary structure comprises 255 residues: MRIIISPAKKMVENIEALPVCGEPSFIDQTNQLLTYLKSLSYEEAKEIWNCNDQLATMNFERIASMNLKTKLTPAILSYQGIQYQYMAPEVLEKDQLEYIQEHLYILSGFYGILKPLDGVTAYRLEMQAKVNLSDKKDLYEFWGSLLYNKLREETDFILNLASKEYSKCIERYVTEDVRLVTCVFGERKGEKVIEKGTYAKMARGEMVRYMAEHKISTMSEVKKFDRLDFSYDENLSNETKLVFLKGESNVRDRK.

This sequence belongs to the UPF0246 family.

This is UPF0246 protein Cphy_1568 from Lachnoclostridium phytofermentans (strain ATCC 700394 / DSM 18823 / ISDg) (Clostridium phytofermentans).